Consider the following 91-residue polypeptide: Small ubiquitin-related modifier (91 aa).

In terms of domain architecture, Ubiquitin-like spans 13–91; the sequence is EYIKIKVVGQ…EVYQEQLGGF (79 aa). Residue Gly90 forms a Glycyl lysine isopeptide (Gly-Lys) (interchain with K-? in acceptor proteins) linkage. Phe91 is a propeptide.

It belongs to the ubiquitin family. SUMO subfamily. Covalently attached to tbx-2. Covalently attached to lin-1. Covalently attached to lin-11. Covalently attached to sop-2. Covalently attached to bet-1. Cleavage of precursor form by ulp-1 is necessary for function.

The protein localises to the cytoplasm. The protein resides in the nucleus. Its subcellular location is the cytoskeleton. It localises to the spindle. It is found in the chromosome. The protein localises to the microtubule organizing center. The protein resides in the centrosome. In terms of biological role, ubiquitin-like protein which can be covalently attached to target lysines as a monomer. Does not seem to be involved in protein degradation and may function as an antagonist of ubiquitin in the degradation process. Plays a role in a number of cellular processes such as nuclear transport, DNA replication and repair, mitosis and signal transduction. Covalent attachment to its substrates requires prior activation by the E1 complex aos-1-uba-2 and linkage to the E2 enzyme ubc-9, and can be promoted by an E3 ligase such as gei-17. Required for embryonic development, fertility, vulval morphogenesis and inhibition of vulval cell fates. Probably by sumoylating bet-1, prevents muscle myosin depletion in aging adults probably by preventing myoblast growth factor receptor egl-15 overexpression. Plays a role in the attenuation of the let-60/ras pathway. Plays a role in male tail tip morphogenesis. Plays a role in the mitochondrial stress response with its covalent attachment to transcription factors dve-1 and afts-1 negatively regulating the mitochondrial unfolded protein response. The sequence is that of Small ubiquitin-related modifier from Caenorhabditis elegans.